Here is a 121-residue protein sequence, read N- to C-terminus: UPF0344 protein BT9727_1053 (121 aa).

The next 4 membrane-spanning stretches (helical) occupy residues 6 to 26 (ITAW…YSAG), 38 to 58 (LMYI…MKTA), 65 to 85 (WYGL…MVLV), and 92 to 112 (ATGA…YLGL).

The protein belongs to the UPF0344 family.

Its subcellular location is the cell membrane. This Bacillus thuringiensis subsp. konkukian (strain 97-27) protein is UPF0344 protein BT9727_1053.